The chain runs to 215 residues: Imidazole glycerol phosphate synthase subunit HisH (215 aa).

The Glutamine amidotransferase type-1 domain occupies threonine 3 to leucine 215. Residue cysteine 81 is the Nucleophile of the active site. Catalysis depends on residues histidine 196 and glutamate 198.

Heterodimer of HisH and HisF.

The protein resides in the cytoplasm. The enzyme catalyses 5-[(5-phospho-1-deoxy-D-ribulos-1-ylimino)methylamino]-1-(5-phospho-beta-D-ribosyl)imidazole-4-carboxamide + L-glutamine = D-erythro-1-(imidazol-4-yl)glycerol 3-phosphate + 5-amino-1-(5-phospho-beta-D-ribosyl)imidazole-4-carboxamide + L-glutamate + H(+). It carries out the reaction L-glutamine + H2O = L-glutamate + NH4(+). The protein operates within amino-acid biosynthesis; L-histidine biosynthesis; L-histidine from 5-phospho-alpha-D-ribose 1-diphosphate: step 5/9. IGPS catalyzes the conversion of PRFAR and glutamine to IGP, AICAR and glutamate. The HisH subunit catalyzes the hydrolysis of glutamine to glutamate and ammonia as part of the synthesis of IGP and AICAR. The resulting ammonia molecule is channeled to the active site of HisF. This is Imidazole glycerol phosphate synthase subunit HisH from Bifidobacterium longum (strain NCC 2705).